A 250-amino-acid chain; its full sequence is MTDDSNKTTHFGFETVPEGEKAGRVQGVFSSVASKYDIMNDVMSVGIHRLWKEAMMDWLAPRAGQKLLDVAGGTGDISFRFLKRAGYGHATVLDLTESMLVEGRKRAEAAAMADQLDWVTGDAMALPFADNTFDVYTISFGIRNVTRPQEALNEAFRVLRPGGRLMVLEFSQLPNPAMQKAYDLYSFNVIPRMGQAIAGDRDSYQYLVESIRKFPDQDTFLKMVRDAGFENAKFRNLSMGIACLHSGWKL.

S-adenosyl-L-methionine is bound by residues T74, D94, 122-123, and S139; that span reads DA.

It belongs to the class I-like SAM-binding methyltransferase superfamily. MenG/UbiE family.

It catalyses the reaction a 2-demethylmenaquinol + S-adenosyl-L-methionine = a menaquinol + S-adenosyl-L-homocysteine + H(+). The catalysed reaction is a 2-methoxy-6-(all-trans-polyprenyl)benzene-1,4-diol + S-adenosyl-L-methionine = a 5-methoxy-2-methyl-3-(all-trans-polyprenyl)benzene-1,4-diol + S-adenosyl-L-homocysteine + H(+). Its pathway is quinol/quinone metabolism; menaquinone biosynthesis; menaquinol from 1,4-dihydroxy-2-naphthoate: step 2/2. The protein operates within cofactor biosynthesis; ubiquinone biosynthesis. Functionally, methyltransferase required for the conversion of demethylmenaquinol (DMKH2) to menaquinol (MKH2) and the conversion of 2-polyprenyl-6-methoxy-1,4-benzoquinol (DDMQH2) to 2-polyprenyl-3-methyl-6-methoxy-1,4-benzoquinol (DMQH2). This chain is Ubiquinone/menaquinone biosynthesis C-methyltransferase UbiE, found in Roseobacter denitrificans (strain ATCC 33942 / OCh 114) (Erythrobacter sp. (strain OCh 114)).